The primary structure comprises 349 residues: Ribosomal RNA large subunit methyltransferase M (349 aa).

S-adenosyl-L-methionine-binding positions include 216-219 (APGG), Asp-235, Asp-255, and Asp-271. Lys-300 acts as the Proton acceptor in catalysis.

The protein belongs to the class I-like SAM-binding methyltransferase superfamily. RNA methyltransferase RlmE family. RlmM subfamily. As to quaternary structure, monomer.

It is found in the cytoplasm. The enzyme catalyses cytidine(2498) in 23S rRNA + S-adenosyl-L-methionine = 2'-O-methylcytidine(2498) in 23S rRNA + S-adenosyl-L-homocysteine + H(+). Functionally, catalyzes the 2'-O-methylation at nucleotide C2498 in 23S rRNA. This Saccharophagus degradans (strain 2-40 / ATCC 43961 / DSM 17024) protein is Ribosomal RNA large subunit methyltransferase M.